Here is a 132-residue protein sequence, read N- to C-terminus: Insulin-like 3 (132 aa).

Residues 1–24 (MSPRPLAWALVLLGAALAVALALG) form the signal peptide. Cystine bridges form between cysteine 36–cysteine 117, cysteine 48–cysteine 130, and cysteine 116–cysteine 121. A propeptide spans 61–104 (VAGGDRELLQWLEGRHLHGQVSDGDPMLVLVPQALPQASLHHHH) (c peptide like).

Belongs to the insulin family. As to quaternary structure, heterodimer of a B chain and an A chain linked by two disulfide bonds. In terms of tissue distribution, more strongly expressed in testis than in ovary.

It is found in the secreted. In terms of biological role, seems to play a role in testicular function. May be a trophic hormone with a role in testicular descent in fetal life. Is a ligand for LGR8 receptor. The chain is Insulin-like 3 (INSL3) from Canis lupus familiaris (Dog).